A 291-amino-acid chain; its full sequence is Proteasome subunit beta (291 aa).

The propeptide at 1-56 is removed in mature form; by autocatalysis; the sequence is MTRSFPDRLPTNLAFPGISVINQSSFVDLLRRQAPELLPVSLGGGQSGGGQQLSHG. Residue Thr57 is the Nucleophile of the active site.

This sequence belongs to the peptidase T1B family. The 20S proteasome core is composed of 14 alpha and 14 beta subunits that assemble into four stacked heptameric rings, resulting in a barrel-shaped structure. The two inner rings, each composed of seven catalytic beta subunits, are sandwiched by two outer rings, each composed of seven alpha subunits. The catalytic chamber with the active sites is on the inside of the barrel. Has a gated structure, the ends of the cylinder being occluded by the N-termini of the alpha-subunits. Is capped by the proteasome-associated ATPase, ARC.

The protein localises to the cytoplasm. It carries out the reaction Cleavage of peptide bonds with very broad specificity.. Its pathway is protein degradation; proteasomal Pup-dependent pathway. With respect to regulation, the formation of the proteasomal ATPase ARC-20S proteasome complex, likely via the docking of the C-termini of ARC into the intersubunit pockets in the alpha-rings, may trigger opening of the gate for substrate entry. Interconversion between the open-gate and close-gate conformations leads to a dynamic regulation of the 20S proteasome proteolysis activity. Its function is as follows. Component of the proteasome core, a large protease complex with broad specificity involved in protein degradation. The sequence is that of Proteasome subunit beta from Mycobacterium leprae (strain Br4923).